An 802-amino-acid polypeptide reads, in one-letter code: Copper-exporting P-type ATPase (802 aa).

2 consecutive HMA domains span residues 5–70 (KKTT…YGVA) and 72–138 (ETVE…YDAS). Cu(+) is bound by residues cysteine 16, cysteine 19, cysteine 83, and cysteine 86. 6 helical membrane passes run 161-181 (LIIS…HLFN), 192-212 (WFQF…FYVG), 224-244 (MDVL…YEMV), 256-276 (LYFE…YLEA), 411-431 (YFVP…ITLV), and 438-458 (PALV…LGLA). Aspartate 495 (4-aspartylphosphate intermediate) is an active-site residue. Residues aspartate 690 and aspartate 694 each contribute to the Mg(2+) site. 2 helical membrane-spanning segments follow: residues 748–767 (LFWA…LGLL) and 771–790 (VAGA…ALRL).

It belongs to the cation transport ATPase (P-type) (TC 3.A.3) family. Type IB subfamily.

It localises to the cell membrane. The catalysed reaction is Cu(+)(in) + ATP + H2O = Cu(+)(out) + ADP + phosphate + H(+). Functionally, involved in copper export. This is Copper-exporting P-type ATPase (copA) from Staphylococcus aureus (strain COL).